A 685-amino-acid chain; its full sequence is A-type ATP synthase subunit I (685 aa).

A run of 7 helical transmembrane segments spans residues 172–192 (VGGLAAVEASGGSVVVAVAVP), 348–368 (EIVPTVFLAITLPLTFALMFP), 394–414 (VIAVMGGASVVSGLLAGEVFG), 464–484 (LFMGAFMLSFGTFLGVVNGVI), 538–558 (LVLAGSVLGLAWMLLAGPIIY), 604–624 (MFVIYYLTVMIMQGGILADVV), and 626–646 (ALLYVGGNLAVAAMEGLLAFA).

Belongs to the V-ATPase 116 kDa subunit family. Has multiple subunits with at least A(3), B(3), C, D, E, F, H, I and proteolipid K(x).

It is found in the cell membrane. Its function is as follows. Component of the A-type ATP synthase that produces ATP from ADP in the presence of a proton gradient across the membrane. In Aeropyrum pernix (strain ATCC 700893 / DSM 11879 / JCM 9820 / NBRC 100138 / K1), this protein is A-type ATP synthase subunit I.